Here is a 101-residue protein sequence, read N- to C-terminus: Integration host factor subunit beta (101 aa).

Residues Pro-57–Asp-101 form a disordered region. A compositionally biased stretch (basic and acidic residues) spans Thr-82–Asp-101.

It belongs to the bacterial histone-like protein family. Heterodimer of an alpha and a beta chain.

This protein is one of the two subunits of integration host factor, a specific DNA-binding protein that functions in genetic recombination as well as in transcriptional and translational control. The protein is Integration host factor subunit beta of Bradyrhizobium diazoefficiens (strain JCM 10833 / BCRC 13528 / IAM 13628 / NBRC 14792 / USDA 110).